A 369-amino-acid chain; its full sequence is Peptide chain release factor 2 (369 aa).

The residue at position 251 (Q251) is an N5-methylglutamine.

Belongs to the prokaryotic/mitochondrial release factor family. In terms of processing, methylated by PrmC. Methylation increases the termination efficiency of RF2.

It is found in the cytoplasm. Functionally, peptide chain release factor 2 directs the termination of translation in response to the peptide chain termination codons UGA and UAA. This Chlamydia muridarum (strain MoPn / Nigg) protein is Peptide chain release factor 2 (prfB).